The chain runs to 539 residues: uncharacterized protein (539 aa).

The disordered stretch occupies residues 316-433 (AEHHHQKGKK…ATVERSSPPE (118 aa)). Over residues 318-352 (HHHQKGKKVPATHRRSSTPHARKTAGTRARTRARK) the composition is skewed to basic residues. Residues 362 to 384 (KISKKDSGESKQKDETAGMERVF) show a composition bias toward basic and acidic residues. Over residues 390–402 (NVRTCSSRASRTG) the composition is skewed to polar residues.

This is an uncharacterized protein from Treponema pallidum (strain Nichols).